The primary structure comprises 392 residues: Obg-like ATPase 1 (392 aa).

The OBG-type G domain occupies 21–285 (LKTGIVGMPN…FTEEEAIEEC (265 aa)). Position 30-35 (30-35 (NVGKST)) interacts with ATP. Residues serine 34 and threonine 55 each coordinate Mg(2+). Methionine 233 contacts ATP. The 84-residue stretch at 306–389 (NLINYFTCGE…ESGDIAHWKA (84 aa)) folds into the TGS domain.

The protein belongs to the TRAFAC class OBG-HflX-like GTPase superfamily. OBG GTPase family. YchF/OLA1 subfamily. As to quaternary structure, monomer. Requires Mg(2+) as cofactor.

It localises to the cytoplasm. The protein resides in the nucleus. Hydrolyzes ATP, and can also hydrolyze GTP with lower efficiency. Has lower affinity for GTP. Negatively regulates the G2/M transition in the cell cycle. This chain is Obg-like ATPase 1, found in Schizosaccharomyces pombe (strain 972 / ATCC 24843) (Fission yeast).